The primary structure comprises 2682 residues: 3-methylorcinaldehyde synthase (2682 aa).

Residues 111–272 are N-terminal acylcarrier protein transacylase domain (SAT); that stretch reads LIPLVVIEQL…TEITLYGAFH (162 aa). Residue Cys154 is the Nucleophile; for transacylase activity of the active site. The Proton donor/acceptor; for transacylase activity role is filled by His272. The 426-residue stretch at 401–826 folds into the Ketosynthase family 3 (KS3) domain; it reads ESDIAVIGMA…GSNASMIVMQ (426 aa). Residues Cys573, His708, and His749 each act as for beta-ketoacyl synthase activity in the active site. The interval 947–1237 is malonyl-CoA:ACP transacylase (MAT) domain; sequence FGGQVSTHIG…ITAMTSRALD (291 aa). The interval 1339–1468 is N-terminal hotdog fold; sequence LTFVGFQDSS…GKIKFTNARD (130 aa). A PKS/mFAS DH domain is found at 1339-1651; the sequence is LTFVGFQDSS…YVKIPKLSMQ (313 aa). The segment at 1367–1649 is product template (PT) domain; sequence LLLGHMTIQT…IAYVKIPKLS (283 aa). Residue His1371 is the Proton acceptor; for dehydratase activity of the active site. The C-terminal hotdog fold stretch occupies residues 1496-1651; the sequence is VDEVLANRSI…YVKIPKLSMQ (156 aa). Catalysis depends on Asp1555, which acts as the Proton donor; for dehydratase activity. The Carrier domain maps to 1723–1797; sequence ENITERVKAV…DLMKVVTGVV (75 aa). The residue at position 1757 (Ser1757) is an O-(pantetheine 4'-phosphoryl)serine. Residues 2021 to 2211 are methyltransferase domain; that stretch reads EWPLNQVMYT…AGYGHVYWTE (191 aa). An NADPH-binding (R) domain region spans residues 2303 to 2548; sequence VTGATGGLGA…LGWTPADAIA (246 aa).

The protein operates within secondary metabolite biosynthesis; terpenoid biosynthesis. Its function is as follows. Non-reducing polyketide synthase; part of the gene cluster that mediates the biosynthesis of eupenifeldin, a bistropolone meroterpenoid that acts as an antitumor agent. The first step of eupenifeldin biosynthesis is the biosynthesis of 3-methylorcinaldehyde performed by the non-reducing polyketide synthase eupA. Oxidative dearomatization of 3-methylorcinaldehyde likely catalyzed by the FAD-dependent monooxygenase eupB is followed by oxidative ring expansion by the 2-oxoglutarate-dependent dioxygenase eupC to provide the first tropolone metabolite, tropolone stipitaldehyde. In parallel, generation of sesquiterpene alpha-humulene from farnesylpyrophosphate (FPP) is catalyzed by the terpene cyclase eupE. The cytochrome P450 monooxygenase eupD then hydroxylates humulene to humulenol. The putative Diels-Alderase eupF probably catalyzes the formation of the tropolone-humulene skeleton by linking humulenol and the polyketide moiety. The short-chain dehydrogenase/reductase eupG and the flavin-dependent monooxygenase eupH are also essential for eupenifeldin biosynthesis and are likely the additional decorating enzymes of the tropolone-humulene skeleton to produce final eupenifeldin or derivatives. The protein is 3-methylorcinaldehyde synthase of Phoma sp.